The sequence spans 238 residues: Ribonuclease PH (238 aa).

Phosphate is bound by residues Arg86 and 124–126 (GTR).

It belongs to the RNase PH family. As to quaternary structure, homohexameric ring arranged as a trimer of dimers.

It carries out the reaction tRNA(n+1) + phosphate = tRNA(n) + a ribonucleoside 5'-diphosphate. Its function is as follows. Phosphorolytic 3'-5' exoribonuclease that plays an important role in tRNA 3'-end maturation. Removes nucleotide residues following the 3'-CCA terminus of tRNAs; can also add nucleotides to the ends of RNA molecules by using nucleoside diphosphates as substrates, but this may not be physiologically important. Probably plays a role in initiation of 16S rRNA degradation (leading to ribosome degradation) during starvation. The sequence is that of Ribonuclease PH from Vibrio atlanticus (strain LGP32) (Vibrio splendidus (strain Mel32)).